Consider the following 715-residue polypeptide: uncharacterized protein (715 aa).

Residues Val-688–Phe-708 traverse the membrane as a helical segment.

Belongs to the plectrovirus ORF1 family.

Its subcellular location is the host membrane. This is an uncharacterized protein from Spiroplasma virus SpV1-R8A2 B (SpV1).